The chain runs to 318 residues: tRNA U34 carboxymethyltransferase (318 aa).

Residues K88, W102, K107, G126, 176-177 (LE), M192, Y196, and R311 each bind carboxy-S-adenosyl-L-methionine.

Belongs to the class I-like SAM-binding methyltransferase superfamily. CmoB family. In terms of assembly, homotetramer.

It catalyses the reaction carboxy-S-adenosyl-L-methionine + 5-hydroxyuridine(34) in tRNA = 5-carboxymethoxyuridine(34) in tRNA + S-adenosyl-L-homocysteine + H(+). Functionally, catalyzes carboxymethyl transfer from carboxy-S-adenosyl-L-methionine (Cx-SAM) to 5-hydroxyuridine (ho5U) to form 5-carboxymethoxyuridine (cmo5U) at position 34 in tRNAs. In Pseudomonas putida (strain GB-1), this protein is tRNA U34 carboxymethyltransferase.